A 302-amino-acid polypeptide reads, in one-letter code: Probable alpha-L-glutamate ligase (302 aa).

Positions leucine 112 to glutamate 294 constitute an ATP-grasp domain. ATP is bound by residues lysine 148, aspartate 185–phenylalanine 186, aspartate 194, and arginine 218–asparagine 220. Mg(2+)-binding residues include aspartate 255, glutamate 267, and asparagine 269. Residues aspartate 255, glutamate 267, and asparagine 269 each coordinate Mn(2+).

This sequence belongs to the RimK family. The cofactor is Mg(2+). Requires Mn(2+) as cofactor.

The polypeptide is Probable alpha-L-glutamate ligase (Haemophilus influenzae (strain 86-028NP)).